We begin with the raw amino-acid sequence, 279 residues long: Probable phosphatase phospho1 (279 aa).

Asp-41 functions as the Nucleophile in the catalytic mechanism. Residues Asp-41 and Asp-43 each contribute to the Mg(2+) site. Asp-43 serves as the catalytic Proton donor. Substrate-binding residues include Asp-52 and Asp-133. Asp-215 lines the Mg(2+) pocket.

Belongs to the HAD-like hydrolase superfamily. PHOSPHO family. The cofactor is Mg(2+).

The protein localises to the extracellular vesicle. The enzyme catalyses phosphoethanolamine + H2O = ethanolamine + phosphate. It catalyses the reaction phosphocholine + H2O = choline + phosphate. Functionally, phosphatase that has a high activity toward phosphoethanolamine (PEA) and phosphocholine (PCho). Involved in the generation of inorganic phosphate for bone mineralization. The chain is Probable phosphatase phospho1 (phospho1) from Danio rerio (Zebrafish).